A 167-amino-acid polypeptide reads, in one-letter code: Small ribosomal subunit protein uS5 (167 aa).

In terms of domain architecture, S5 DRBM spans 12–75; it reads LEERVVTINR…EDAKKNMVFV (64 aa).

This sequence belongs to the universal ribosomal protein uS5 family. Part of the 30S ribosomal subunit. Contacts proteins S4 and S8.

Functionally, with S4 and S12 plays an important role in translational accuracy. Located at the back of the 30S subunit body where it stabilizes the conformation of the head with respect to the body. This chain is Small ribosomal subunit protein uS5, found in Listeria innocua serovar 6a (strain ATCC BAA-680 / CLIP 11262).